Reading from the N-terminus, the 242-residue chain is Dehydration-responsive element-binding protein 1J (242 aa).

Positions 20–29 (SSATTAATAT) are enriched in low complexity. The segment at 20-44 (SSATTAATATGPASPKRPAGRTKFQ) is disordered. A DNA-binding region (AP2/ERF) is located at residues 50 to 109 (VFRGVRRRGRAGRWVCEVRVPGSRGDRLWVGTFDTAEEAARAHDAAMLALCGASASLNFA). Residues 143–184 (FQRRGSTAATATATSGDAASTAPPSSSPVLSPNDDNASSAST) are disordered. Residues 148 to 184 (STAATATATSGDAASTAPPSSSPVLSPNDDNASSAST) show a composition bias toward low complexity.

The protein belongs to the AP2/ERF transcription factor family. ERF subfamily.

Its subcellular location is the nucleus. In terms of biological role, transcriptional activator that binds specifically to the DNA sequence 5'-[AG]CCGAC-3'. Binding to the C-repeat/DRE element mediates high salinity- and dehydration-inducible transcription. The chain is Dehydration-responsive element-binding protein 1J (DREB1J) from Oryza sativa subsp. japonica (Rice).